A 182-amino-acid chain; its full sequence is UPF0397 protein VS_II0189 (182 aa).

Transmembrane regions (helical) follow at residues 8–28, 41–61, 72–92, 110–130, and 146–166; these read VVVI…MFGV, AVLA…VGFI, WGVW…IGLF, FALF…SSAF, and QLSI…FLIL.

It belongs to the UPF0397 family.

It localises to the cell membrane. This chain is UPF0397 protein VS_II0189, found in Vibrio atlanticus (strain LGP32) (Vibrio splendidus (strain Mel32)).